We begin with the raw amino-acid sequence, 284 residues long: RNase adapter protein RapZ (284 aa).

Residue 8–15 (GRSGSGKS) participates in ATP binding. 56-59 (DVRN) contributes to the GTP binding site. Positions 266–284 (RSRGKNVQSRHRTLEKRKT) are RNA-binding.

The protein belongs to the RapZ-like family. RapZ subfamily. Homotrimer.

Modulates the synthesis of GlmS, by affecting the processing and stability of the regulatory small RNA GlmZ. When glucosamine-6-phosphate (GlcN6P) concentrations are high in the cell, RapZ binds GlmZ and targets it to cleavage by RNase E. Consequently, GlmZ is inactivated and unable to activate GlmS synthesis. Under low GlcN6P concentrations, RapZ is sequestered and inactivated by an other regulatory small RNA, GlmY, preventing GlmZ degradation and leading to synthesis of GlmS. This is RNase adapter protein RapZ from Citrobacter koseri (strain ATCC BAA-895 / CDC 4225-83 / SGSC4696).